The primary structure comprises 531 residues: Probable bifunctional methylthioribulose-1-phosphate dehydratase/enolase-phosphatase E1 2 (531 aa).

The tract at residues 1-248 is methylthioribulose-1-phosphate dehydratase; it reads MGVPSEGAVG…AIKLHQLGLD (248 aa). C120 lines the substrate pocket. Residues H138 and H140 each contribute to the Zn(2+) site. The active-site Proton donor/acceptor; for methylthioribulose-1-phosphate dehydratase activity is the E163. Position 213 (H213) interacts with Zn(2+). Residues 292–531 are enolase-phosphatase E1; it reads ILLDIEGTTT…FRTIETFLEI (240 aa). Mg(2+) contacts are provided by D295 and E297. Substrate is bound by residues 430 to 431 and K464; that span reads SS. D490 provides a ligand contact to Mg(2+).

It in the N-terminal section; belongs to the aldolase class II family. MtnB subfamily. In the C-terminal section; belongs to the HAD-like hydrolase superfamily. MasA/MtnC family. It depends on Zn(2+) as a cofactor. The cofactor is Mg(2+).

The enzyme catalyses 5-(methylsulfanyl)-D-ribulose 1-phosphate = 5-methylsulfanyl-2,3-dioxopentyl phosphate + H2O. It carries out the reaction 5-methylsulfanyl-2,3-dioxopentyl phosphate + H2O = 1,2-dihydroxy-5-(methylsulfanyl)pent-1-en-3-one + phosphate. The protein operates within amino-acid biosynthesis; L-methionine biosynthesis via salvage pathway; L-methionine from S-methyl-5-thio-alpha-D-ribose 1-phosphate: step 2/6. It participates in amino-acid biosynthesis; L-methionine biosynthesis via salvage pathway; L-methionine from S-methyl-5-thio-alpha-D-ribose 1-phosphate: step 3/6. It functions in the pathway amino-acid biosynthesis; L-methionine biosynthesis via salvage pathway; L-methionine from S-methyl-5-thio-alpha-D-ribose 1-phosphate: step 4/6. This Vitis vinifera (Grape) protein is Probable bifunctional methylthioribulose-1-phosphate dehydratase/enolase-phosphatase E1 2.